A 261-amino-acid chain; its full sequence is UPF0328 protein ECU02_0020/ECU04_1700 (261 aa).

A disordered region spans residues 1 to 20; the sequence is MSITSIPQPHETNEQHHTEI. Over residues 11–20 the composition is skewed to basic and acidic residues; sequence ETNEQHHTEI.

This sequence belongs to the UPF0328 family.

This chain is UPF0328 protein ECU02_0020/ECU04_1700, found in Encephalitozoon cuniculi (strain GB-M1) (Microsporidian parasite).